Reading from the N-terminus, the 132-residue chain is Translation initiation factor 5A (132 aa).

Lysine 36 carries the hypusine modification.

This sequence belongs to the eIF-5A family.

Its subcellular location is the cytoplasm. Its function is as follows. Functions by promoting the formation of the first peptide bond. The sequence is that of Translation initiation factor 5A from Methanosphaera stadtmanae (strain ATCC 43021 / DSM 3091 / JCM 11832 / MCB-3).